Consider the following 311-residue polypeptide: Tricarboxylate transport protein, mitochondrial (311 aa).

Residues 1 to 13 constitute a propeptide, removed in mature form; it reads MAAPRAPRALTAA. Solcar repeat units lie at residues 23-111, 122-208, and 218-303; these read THPG…LSNH, RRGL…LRNW, and MNPL…VVKL. The next 3 helical transmembrane spans lie at 29-46, 86-105, and 129-143; these read ILAG…TFPT, GLSS…FGMF, and LGAG…VCPM. The residue at position 156 (S156) is a Phosphoserine. 3 helical membrane passes run 183–202, 224–241, and 278–297; these read GLTA…FFVM, GVFG…NTPL, and GTVP…FVIY.

It belongs to the mitochondrial carrier (TC 2.A.29) family. Possesses a short cleavable presequence, which, however, is found to be dispensable both for targeting to mitochondria and insertion into the inner membrane. However, the presequence is required to keep SLC25A1 in a soluble state and thus in an import-competent state. Mature SLC25A1 lacking the presequence is prone to aggregation.

It is found in the mitochondrion inner membrane. The enzyme catalyses (S)-malate(in) + citrate(out) = (S)-malate(out) + citrate(in). It catalyses the reaction citrate(out) + succinate(in) = citrate(in) + succinate(out). The catalysed reaction is D-threo-isocitrate(in) + citrate(out) = D-threo-isocitrate(out) + citrate(in). It carries out the reaction cis-aconitate(in) + citrate(out) = cis-aconitate(out) + citrate(in). The enzyme catalyses trans-aconitate(in) + citrate(out) = trans-aconitate(out) + citrate(in). It catalyses the reaction phosphoenolpyruvate(in) + citrate(out) = phosphoenolpyruvate(out) + citrate(in). The catalysed reaction is maleate(in) + citrate(out) = maleate(out) + citrate(in). Functionally, mitochondrial electroneutral antiporter that exports citrate from the mitochondria into the cytosol in exchange for malate. Also able to mediate the exchange of citrate for isocitrate, phosphoenolpyruvate, cis-aconitate and to a lesser extent trans-aconitate, maleate and succinate. In the cytoplasm, citrate plays important roles in fatty acid and sterol synthesis, regulation of glycolysis, protein acetylation, and other physiopathological processes. In Rattus norvegicus (Rat), this protein is Tricarboxylate transport protein, mitochondrial (Slc25a1).